A 335-amino-acid polypeptide reads, in one-letter code: NAC domain-containing protein 87 (335 aa).

The NAC domain occupies 21 to 172; sequence LPPGFRFHPT…EWVVCRVFHK (152 aa). Residues 119–178 mediate DNA binding; that stretch reads VGMKKTLVFYRGRAPKGEKTNWVMHEYRLEGKYSYYNLPKSARDEWVVCRVFHKNNPSTT.

It is found in the nucleus. Binds to the promoter regions of genes involved in chlorophyll catabolic processes, such as NYC1, SGR1, SGR2 and PAO. The sequence is that of NAC domain-containing protein 87 from Arabidopsis thaliana (Mouse-ear cress).